Consider the following 103-residue polypeptide: Large ribosomal subunit protein bL21 (103 aa).

Belongs to the bacterial ribosomal protein bL21 family. In terms of assembly, part of the 50S ribosomal subunit. Contacts protein L20.

Its function is as follows. This protein binds to 23S rRNA in the presence of protein L20. This chain is Large ribosomal subunit protein bL21, found in Shewanella amazonensis (strain ATCC BAA-1098 / SB2B).